Here is a 288-residue protein sequence, read N- to C-terminus: Putative N-terminal acetyltransferase 2 (288 aa).

The segment at 68–90 (TEEKSSQFDENKSKSNNGKKNEP) is disordered.

As to quaternary structure, heterooligomeric.

It localises to the cytoplasm. Maybe involved in N-terminal acetylation of proteins. N-acetylation plays a role in normal eukaryotic translation and processing, protect against proteolytic degradation and protein turnover. This chain is Putative N-terminal acetyltransferase 2 (NAT2), found in Saccharomyces cerevisiae (strain ATCC 204508 / S288c) (Baker's yeast).